The sequence spans 241 residues: Large ribosomal subunit protein uL1 (241 aa).

This sequence belongs to the universal ribosomal protein uL1 family. As to quaternary structure, part of the 50S ribosomal subunit.

Functionally, binds directly to 23S rRNA. The L1 stalk is quite mobile in the ribosome, and is involved in E site tRNA release. Protein L1 is also a translational repressor protein, it controls the translation of the L11 operon by binding to its mRNA. The chain is Large ribosomal subunit protein uL1 from Streptomyces coelicolor (strain ATCC BAA-471 / A3(2) / M145).